A 294-amino-acid chain; its full sequence is Nucleotide-binding protein CLL_A3342 (294 aa).

8–15 is an ATP binding site; sequence GLSGAGKT. 59–62 is a binding site for GTP; the sequence is DIRG.

It belongs to the RapZ-like family.

Its function is as follows. Displays ATPase and GTPase activities. The sequence is that of Nucleotide-binding protein CLL_A3342 from Clostridium botulinum (strain Eklund 17B / Type B).